The following is a 261-amino-acid chain: Zinc finger protein 664 (261 aa).

9 consecutive C2H2-type zinc fingers follow at residues 3–25 (YKCP…QKIH), 31–53 (HKCD…WRDH), 59–81 (YKCD…KKIH), 87–109 (YKCY…MRVH), 115–137 (YVCS…QRVH), 143–165 (FKCE…QRVH), 171–193 (YKCY…QRVH), 199–221 (YRCC…QRVH), and 227–249 (FKCD…QRVH). Residue Lys-257 forms a Glycyl lysine isopeptide (Lys-Gly) (interchain with G-Cter in SUMO2) linkage.

The protein belongs to the krueppel C2H2-type zinc-finger protein family.

Its subcellular location is the nucleus. Its function is as follows. May be involved in transcriptional regulation. In Homo sapiens (Human), this protein is Zinc finger protein 664.